Here is a 61-residue protein sequence, read N- to C-terminus: Bacteriocin sakacin-P (61 aa).

A propeptide spanning residues 1 to 18 (MEKFIELSLKEVTAITGG) is cleaved from the precursor. Cys27 and Cys32 are disulfide-bonded.

The protein belongs to the bacteriocin class IIA/YGNGV family.

The protein localises to the secreted. In terms of biological role, bactericidal activity; inhibits closely related Lactobacilli, Listeria monocytogenes and ivanovvi, Enterococcus faecalis, Carnobacterium sp and Brocothrix thermosphacta. This is Bacteriocin sakacin-P (sakP) from Latilactobacillus sakei (Lactobacillus sakei).